The sequence spans 507 residues: MAQYDVAIIGAGSAGALIAARLSEDPARNVLLIEAGGRPSDPDILKPSMWPAIQHRSYDWDYKTTPQEGAAGRSFAWARGKGLGGSSLLHAMGYMRGHPADFAAWAEATGDERWSWEGLLPSFMANEDHVSGGDGIHGKDGPMPVWIPDDEVSPLTQAFMTAGNALGLPRIPDHNTGQMIGVTPNSLMIRDGRRVTVAEAWLTPEVCARPNLTIMTGTLTRRLKLEKSHVSAIELAGPEGLATVTASEIILSAGSLESPALLMRSGIGRENVLREAGVTCRVKAPELGLNLMDHLLGAGNLYATKKHLPPSRLQHSESMAYMRAGDFSAGGQPEIVVGCGVAPIVSESFTAPAPGNAYSFLFGVTHPTSRGEIRITGDAPDSPLIIDPRYLQTQNDRNLFRAALGAAREIGHRPELAEWRDHEILPKSLAASQDIDTFIAKAVITHHHPSGTCRMGKDEMSVVDADLRLRGLDNLYVVDGSVLPSLTAGPIHAAVQAIAENFTTGFK.

The active-site Proton acceptor is His448.

Belongs to the GMC oxidoreductase family. As to quaternary structure, monomer. FAD is required as a cofactor.

The catalysed reaction is pyridoxine + O2 = pyridoxal + H2O2. It participates in cofactor degradation; B6 vitamer degradation; pyridoxal from pyridoxine (oxidase route): step 1/1. The protein is Pyridoxine 4-oxidase (pno) of Microbacterium luteolum (Aureobacterium luteolum).